The primary structure comprises 393 residues: Formate-dependent phosphoribosylglycinamide formyltransferase (393 aa).

N(1)-(5-phospho-beta-D-ribosyl)glycinamide-binding positions include 22-23 and glutamate 82; that span reads EL. ATP is bound by residues arginine 114, lysine 155, 160–165, 195–198, and glutamate 203; these read SSGKGQ and ESFV. In terms of domain architecture, ATP-grasp spans 119–308; the sequence is RLAAEEVGLK…EFALHVRAIL (190 aa). 2 residues coordinate Mg(2+): glutamate 267 and glutamate 279. Residues aspartate 286, lysine 356, and 363–364 each bind N(1)-(5-phospho-beta-D-ribosyl)glycinamide; that span reads RR.

The protein belongs to the PurK/PurT family. Homodimer.

The catalysed reaction is N(1)-(5-phospho-beta-D-ribosyl)glycinamide + formate + ATP = N(2)-formyl-N(1)-(5-phospho-beta-D-ribosyl)glycinamide + ADP + phosphate + H(+). It participates in purine metabolism; IMP biosynthesis via de novo pathway; N(2)-formyl-N(1)-(5-phospho-D-ribosyl)glycinamide from N(1)-(5-phospho-D-ribosyl)glycinamide (formate route): step 1/1. Functionally, involved in the de novo purine biosynthesis. Catalyzes the transfer of formate to 5-phospho-ribosyl-glycinamide (GAR), producing 5-phospho-ribosyl-N-formylglycinamide (FGAR). Formate is provided by PurU via hydrolysis of 10-formyl-tetrahydrofolate. This is Formate-dependent phosphoribosylglycinamide formyltransferase from Maridesulfovibrio salexigens (strain ATCC 14822 / DSM 2638 / NCIMB 8403 / VKM B-1763) (Desulfovibrio salexigens).